A 171-amino-acid polypeptide reads, in one-letter code: MTTRQSSFSYEEILICGRGEMFGPGNAQLPLPPMLMFNRITDISETGGPHDKGYVRAEFDITPDLWFFPCHFMGDPVMPGCLGLDAMWQLTGFFLGWLGEAGKGRAISTGEVKFTGMVTPKTKLVEYGIDFKRVMRGRLVLGIADGWMKADGETIYKATDLRVGLFQEKAG.

Residue His-71 is part of the active site.

This sequence belongs to the thioester dehydratase family. FabA subfamily. In terms of assembly, homodimer.

The protein localises to the cytoplasm. It carries out the reaction a (3R)-hydroxyacyl-[ACP] = a (2E)-enoyl-[ACP] + H2O. The enzyme catalyses (3R)-hydroxydecanoyl-[ACP] = (2E)-decenoyl-[ACP] + H2O. The catalysed reaction is (2E)-decenoyl-[ACP] = (3Z)-decenoyl-[ACP]. It functions in the pathway lipid metabolism; fatty acid biosynthesis. Its function is as follows. Necessary for the introduction of cis unsaturation into fatty acids. Catalyzes the dehydration of (3R)-3-hydroxydecanoyl-ACP to E-(2)-decenoyl-ACP and then its isomerization to Z-(3)-decenoyl-ACP. Can catalyze the dehydratase reaction for beta-hydroxyacyl-ACPs with saturated chain lengths up to 16:0, being most active on intermediate chain length. The sequence is that of 3-hydroxydecanoyl-[acyl-carrier-protein] dehydratase from Sinorhizobium medicae (strain WSM419) (Ensifer medicae).